The following is a 498-amino-acid chain: Fascin-3 (498 aa).

Belongs to the fascin family. Expressed in testis.

Its subcellular location is the cytoplasm. The protein localises to the cytoskeleton. Functionally, acts as an actin bundling protein. The polypeptide is Fascin-3 (Fscn3) (Mus musculus (Mouse)).